Consider the following 204-residue polypeptide: Large ribosomal subunit protein bL25 (204 aa).

It belongs to the bacterial ribosomal protein bL25 family. CTC subfamily. As to quaternary structure, part of the 50S ribosomal subunit; part of the 5S rRNA/L5/L18/L25 subcomplex. Contacts the 5S rRNA. Binds to the 5S rRNA independently of L5 and L18.

In terms of biological role, this is one of the proteins that binds to the 5S RNA in the ribosome where it forms part of the central protuberance. This Burkholderia mallei (strain NCTC 10247) protein is Large ribosomal subunit protein bL25.